The chain runs to 433 residues: Trigger factor (433 aa).

The 86-residue stretch at 161-246 (EDRVVIDFVG…LKKVENIVLP (86 aa)) folds into the PPIase FKBP-type domain.

It belongs to the FKBP-type PPIase family. Tig subfamily.

Its subcellular location is the cytoplasm. It carries out the reaction [protein]-peptidylproline (omega=180) = [protein]-peptidylproline (omega=0). In terms of biological role, involved in protein export. Acts as a chaperone by maintaining the newly synthesized protein in an open conformation. Functions as a peptidyl-prolyl cis-trans isomerase. This is Trigger factor from Actinobacillus pleuropneumoniae serotype 7 (strain AP76).